The sequence spans 224 residues: Cell division protein SepF (224 aa).

The disordered stretch occupies residues 21–78 (DDYYEDDDRGPAPRGYRRPREDRFEDEGYAPRGYDGHPEDRRRDYDEPPAYRAGLAGG). Positions 54 to 66 (YDGHPEDRRRDYD) are enriched in basic and acidic residues.

This sequence belongs to the SepF family. In terms of assembly, homodimer. Interacts with FtsZ.

The protein localises to the cytoplasm. Its function is as follows. Cell division protein that is part of the divisome complex and is recruited early to the Z-ring. Probably stimulates Z-ring formation, perhaps through the cross-linking of FtsZ protofilaments. Its function overlaps with FtsA. This Mycolicibacterium gilvum (strain PYR-GCK) (Mycobacterium gilvum (strain PYR-GCK)) protein is Cell division protein SepF.